A 304-amino-acid chain; its full sequence is UDP-3-O-acyl-N-acetylglucosamine deacetylase (304 aa).

Positions 78, 237, and 241 each coordinate Zn(2+). The Proton donor role is filled by His264.

Belongs to the LpxC family. Zn(2+) serves as cofactor.

It catalyses the reaction a UDP-3-O-[(3R)-3-hydroxyacyl]-N-acetyl-alpha-D-glucosamine + H2O = a UDP-3-O-[(3R)-3-hydroxyacyl]-alpha-D-glucosamine + acetate. It functions in the pathway glycolipid biosynthesis; lipid IV(A) biosynthesis; lipid IV(A) from (3R)-3-hydroxytetradecanoyl-[acyl-carrier-protein] and UDP-N-acetyl-alpha-D-glucosamine: step 2/6. In terms of biological role, catalyzes the hydrolysis of UDP-3-O-myristoyl-N-acetylglucosamine to form UDP-3-O-myristoylglucosamine and acetate, the committed step in lipid A biosynthesis. The polypeptide is UDP-3-O-acyl-N-acetylglucosamine deacetylase (Thioalkalivibrio sulfidiphilus (strain HL-EbGR7)).